We begin with the raw amino-acid sequence, 149 residues long: 3-hydroxyacyl-[acyl-carrier-protein] dehydratase FabZ (149 aa).

Histidine 49 is a catalytic residue.

It belongs to the thioester dehydratase family. FabZ subfamily.

The protein resides in the cytoplasm. The enzyme catalyses a (3R)-hydroxyacyl-[ACP] = a (2E)-enoyl-[ACP] + H2O. Functionally, involved in unsaturated fatty acids biosynthesis. Catalyzes the dehydration of short chain beta-hydroxyacyl-ACPs and long chain saturated and unsaturated beta-hydroxyacyl-ACPs. This Sulfurimonas denitrificans (strain ATCC 33889 / DSM 1251) (Thiomicrospira denitrificans (strain ATCC 33889 / DSM 1251)) protein is 3-hydroxyacyl-[acyl-carrier-protein] dehydratase FabZ.